The primary structure comprises 171 residues: Large ribosomal subunit protein bL9 (171 aa).

Belongs to the bacterial ribosomal protein bL9 family.

Its function is as follows. Binds to the 23S rRNA. The polypeptide is Large ribosomal subunit protein bL9 (Rickettsia rickettsii (strain Iowa)).